We begin with the raw amino-acid sequence, 896 residues long: MSTVNHHCLLNFPHIPPSIPPNHRPKLLSSLSLYRKPERLFALSASLSLSPATIHECSSSSSSSSSSFDKEETEDIESVIDGFFYLLRLSAQYHDVEVTKAVHASFLKLREEKTRLGNALISTYLKLGFPREAILVFVSLSSPTVVSYTALISGFSRLNLEIEALKVFFRMRKAGLVQPNEYTFVAILTACVRVSRFSLGIQIHGLIVKSGFLNSVFVSNSLMSLYDKDSGSSCDDVLKLFDEIPQRDVASWNTVVSSLVKEGKSHKAFDLFYEMNRVEGFGVDSFTLSTLLSSCTDSSVLLRGRELHGRAIRIGLMQELSVNNALIGFYSKFWDMKKVESLYEMMMAQDAVTFTEMITAYMSFGMVDSAVEIFANVTEKNTITYNALMAGFCRNGHGLKALKLFTDMLQRGVELTDFSLTSAVDACGLVSEKKVSEQIHGFCIKFGTAFNPCIQTALLDMCTRCERMADAEEMFDQWPSNLDSSKATTSIIGGYARNGLPDKAVSLFHRTLCEQKLFLDEVSLTLILAVCGTLGFREMGYQIHCYALKAGYFSDISLGNSLISMYAKCCDSDDAIKIFNTMREHDVISWNSLISCYILQRNGDEALALWSRMNEKEIKPDIITLTLVISAFRYTESNKLSSCRDLFLSMKTIYDIEPTTEHYTAFVRVLGHWGLLEEAEDTINSMPVQPEVSVLRALLDSCRIHSNTSVAKRVAKLILSTKPETPSEYILKSNIYSASGFWHRSEMIREEMRERGYRKHPAKSWIIHENKIHSFHARDTSHPQEKDIYRGLEILIMECLKVGYEPNTEYVLQEVDEFMKKSFLFHHSAKLAVTYGILSSNTRGKPVRVMKNVMLCGDCHEFFKYISVVVKREIVLRDSSGFHHFVNGKCSCRDLW.

17 PPR repeats span residues 113–143 (KTRL…LSSP), 144–178 (TVVS…GLVQ), 180–214 (NEYT…GFLN), 215–247 (SVFV…IPQR), 248–278 (DVAS…MNRV), 284–318 (DSFT…GLMQ), 319–349 (ELSV…MMAQ), 350–380 (DAVT…VTEK), 381–415 (NTIT…GVEL), 416–450 (TDFS…GTAF), 451–481 (NPCI…WPSN), 484–519 (SSKA…KLFL), 520–554 (DEVS…GYFS), 555–585 (DISL…MREH), 586–620 (DVIS…EIKP), 621–653 (DIIT…MKTI), and 659–689 (TTEH…MPVQ). The tract at residues 694–769 (VLRALLDSCR…HPAKSWIIHE (76 aa)) is type E motif. Residues 770 to 800 (NKIHSFHARDTSHPQEKDIYRGLEILIMECL) form a type E(+) motif region. The tract at residues 801–896 (KVGYEPNTEY…NGKCSCRDLW (96 aa)) is type DYW motif.

The protein belongs to the PPR family. PCMP-H subfamily.

Functionally, may play a role in embryogenesis. This chain is Pentatricopeptide repeat-containing protein At5g03800 (EMB175), found in Arabidopsis thaliana (Mouse-ear cress).